A 343-amino-acid chain; its full sequence is Mitochondrial distribution and morphology protein 34 (343 aa).

The region spanning 1 to 196 is the SMP-LTD domain; sequence MSFVFPSWST…LPGIIHRLSQ (196 aa). 2 disordered regions span residues 227–255 and 300–325; these read EVEE…IGPG and GAGT…KAKR. Residues 306-317 are compositionally biased toward low complexity; it reads SGRASLASSSVG.

Belongs to the MDM34 family. Component of the ER-mitochondria encounter structure (ERMES) or MDM complex, composed of MMM1, MDM10, MDM12 and MDM34.

Its subcellular location is the mitochondrion outer membrane. Functionally, component of the ERMES/MDM complex, which serves as a molecular tether to connect the endoplasmic reticulum (ER) and mitochondria. Components of this complex are involved in the control of mitochondrial shape and protein biogenesis, and function in nonvesicular lipid trafficking between the ER and mitochondria. MDM34 is required for the interaction of the ER-resident membrane protein MMM1 and the outer mitochondrial membrane-resident beta-barrel protein MDM10. The polypeptide is Mitochondrial distribution and morphology protein 34 (Cryptococcus neoformans var. neoformans serotype D (strain B-3501A) (Filobasidiella neoformans)).